We begin with the raw amino-acid sequence, 319 residues long: N-acetyl-D-glucosamine kinase (319 aa).

Residue threonine 14 coordinates ATP. Substrate-binding residues include asparagine 37 and aspartate 113. Threonine 135 is a binding site for ATP. Substrate is bound by residues 153–155 and aspartate 160; that span reads GWG. Alanine 220 contacts ATP.

The protein belongs to the eukaryotic-type N-acetylglucosamine kinase family. In terms of assembly, homodimer.

The enzyme catalyses N-acetyl-D-glucosamine + ATP = N-acetyl-D-glucosamine 6-phosphate + ADP + H(+). Its function is as follows. Converts N-acetylglucosamine (GlcNAc), a major component of complex carbohydrates, into GlcNAc 6-phosphate. Also has ManNAc kinase activity. This chain is N-acetyl-D-glucosamine kinase (nagk), found in Dictyostelium discoideum (Social amoeba).